The primary structure comprises 1135 residues: Envelopment polyprotein (1135 aa).

An N-terminal signal peptide occupies residues 1 to 18 (MIMWGLLLTMILIDFGAS). The Lumenal segment spans residues 19–495 (LRNVYDMKIE…ALLTTFCFGW (477 aa)). Disulfide bonds link Cys29-Cys151, Cys63-Cys157, Cys109-Cys128, Cys133-Cys138, Cys175-Cys185, Cys210-Cys247, Cys234-Cys351, Cys376-Cys435, Cys380-Cys389, Cys405-Cys424, and Cys452-Cys475. A glycan (N-linked (GlcNAc...) asparagine; by host) is linked at Asn134. Asn235 and Asn347 each carry an N-linked (GlcNAc...) asparagine; by host glycan. An N-linked (GlcNAc...) asparagine; by host glycan is attached at Asn399. A helical membrane pass occupies residues 496 to 516 (ILILSITLAVLVVLKFFAAIL). The segment at 516-533 (LHNSSQENRFKIILRKIK) is binding to the ribonucleoprotein. The Cytoplasmic segment spans residues 517–627 (HNSSQENRFK…LNLFRYKSRC (111 aa)). CCHC-type zinc fingers lie at residues 545–565 (CEVCKYECETGKELKAHNLSC) and 570–591 (CPYCFTHCEPTESAFQAHYKVC). Binding to the ribonucleoprotein stretches follow at residues 588 to 605 (YKVCQATHRFRDDLKKTI), 592 to 603 (QATHRFRDDLKK), and 611 to 625 (SPGCYRTLNLFRYKS). An ITAM domain is found at 611-634 (SPGCYRTLNLFRYKSRCYIFTVWV). Tyr615 and Tyr628 each carry phosphotyrosine. The YxxL signature appears at 615–618 (YRTL). A helical membrane pass occupies residues 628–648 (YIFTVWVTLLIIESIMWAASA). The Lumenal segment spans residues 649–1105 (SETVLEPSWN…EWITGIFNGN (457 aa)). 8 disulfides stabilise this stretch: Cys735–Cys770, Cys739–Cys777, Cys751–Cys885, Cys765–Cys896, Cys780–Cys904, Cys806–Cys815, Cys823–Cys832, and Cys863–Cys867. Positions 757-777 (FEYENNWGCNPADCPGIGTGC) are fusion loop. An N-linked (GlcNAc...) asparagine; by host glycan is attached at Asn928. 5 cysteine pairs are disulfide-bonded: Cys970–Cys1000, Cys993–Cys1045, Cys1010–Cys1015, Cys1046–Cys1051, and Cys1085–Cys1089. Residues 1106–1126 (WIVIVVLVFFFILSLILLSLL) traverse the membrane as a helical segment. The binding to the ribonucleoprotein stretch occupies residues 1122–1135 (LLSLLCPIRKHKRS). The Cytoplasmic portion of the chain corresponds to 1127–1135 (CPIRKHKRS).

Belongs to the hantavirus envelope glycoprotein family. Homodimer. Homotetramer; forms heterotetrameric Gn-Gc spikes in the pre-fusion conformation. Interacts (via C-terminus) with the nucleoprotein. Interacts with host TUFM; this interaction contributes to the virus-induced degradation of mitochondria by autophagy, which leads to degradation of host MAVS and inhibition of type I interferon (IFN) responses. Interacts with host MAP1LC3B; this interaction contributes to the virus-induced degradation of mitochondria by autophagy, which leads to degradation of host MAVS and inhibition of type I interferon (IFN) responses. As to quaternary structure, homodimer. Homotetramer; forms heterotetrameric Gn-Gc spikes in the pre-fusion conformation. Homotrimer; forms homotrimer in the post-fusion conformation at acidic pH. Interacts (via C-terminus) with the nucleoprotein. Post-translationally, envelope polyprotein precursor is quickly cleaved in vivo just after synthesis, presumably by host signal peptidase.

It localises to the virion membrane. It is found in the host cell surface. The protein resides in the host Golgi apparatus membrane. The protein localises to the host endoplasmic reticulum membrane. Its subcellular location is the host mitochondrion. Its function is as follows. Forms homotetramers with glycoprotein C at the surface of the virion. Attaches the virion to host cell receptors including integrin ITGAV/ITGB3. This attachment induces virion internalization predominantly through clathrin-dependent endocytosis. Mediates the assembly and budding of infectious virus particles through its interaction with the nucleocapsid protein and the viral genome. May dysregulate normal immune and endothelial cell responses through an ITAM motif. Translocates to mitochondria, binds to host TUFM and recruits MAP1LC3B. These interactions induce mitochondrial autophagy and therefore destruction of host MAVS leading to inhibition of type I interferon (IFN) responses. Concomitant breakdown of glycoprotein N is apparently prevented by the nucleoprotein that may inhibit Gn-stimulated autophagosome-lysosome fusion. Interacts with the viral genomic RNA. Functionally, forms homotetramers with glycoprotein N at the surface of the virion. Attaches the virion to host cell receptors including integrin ITGAV/ITGB3. This attachment induces virion internalization predominantly through clathrin-dependent endocytosis. Class II fusion protein that promotes fusion of viral membrane with host endosomal membrane after endocytosis of the virion. The chain is Envelopment polyprotein (GP) from Dobrava-Belgrade orthohantavirus (DOBV).